Consider the following 106-residue polypeptide: Large ribosomal subunit protein uL24 (106 aa).

The protein belongs to the universal ribosomal protein uL24 family. Part of the 50S ribosomal subunit.

In terms of biological role, one of two assembly initiator proteins, it binds directly to the 5'-end of the 23S rRNA, where it nucleates assembly of the 50S subunit. Functionally, one of the proteins that surrounds the polypeptide exit tunnel on the outside of the subunit. This chain is Large ribosomal subunit protein uL24, found in Polaromonas naphthalenivorans (strain CJ2).